The primary structure comprises 277 residues: Co-chaperone protein DjlA (277 aa).

Topologically, residues 1–4 (MWGK) are periplasmic. The chain crosses the membrane as a helical span at residues 5 to 28 (ILGAFFGFLLGGPFGLLLGLFLGH). Residues 29–277 (KFDKARRNVY…DMIRKEKGFK (249 aa)) lie on the Cytoplasmic side of the membrane. Residues 211–277 (DAYEVLGVTE…DMIRKEKGFK (67 aa)) enclose the J domain.

As to quaternary structure, homodimer.

It is found in the cell inner membrane. In terms of biological role, regulatory DnaK co-chaperone. Direct interaction between DnaK and DjlA is needed for the induction of the wcaABCDE operon, involved in the synthesis of a colanic acid polysaccharide capsule, possibly through activation of the RcsB/RcsC phosphotransfer signaling pathway. The colanic acid capsule may help the bacterium survive conditions outside the host. This Photobacterium profundum (strain SS9) protein is Co-chaperone protein DjlA.